Reading from the N-terminus, the 174-residue chain is UPF0398 protein llmg_0513 (174 aa).

The protein belongs to the UPF0398 family.

The protein is UPF0398 protein llmg_0513 of Lactococcus lactis subsp. cremoris (strain MG1363).